Consider the following 1558-residue polypeptide: Eukaryotic translation initiation factor 2-alpha kinase 1 (1558 aa).

One can recognise a Protein kinase domain in the interval 429-789 (FFEEKILGCG…AYNLLHESVL (361 aa)). ATP is bound by residues 435–443 (LGCGGFGYV) and Lys-458. The Proton acceptor role is filled by Asp-660. The interval 1014–1033 (GTSTNNNNNNNNNNMGNNNI) is disordered.

The protein belongs to the protein kinase superfamily. Ser/Thr protein kinase family. GCN2 subfamily. Auto-phosphorylated.

It carries out the reaction L-seryl-[protein] + ATP = O-phospho-L-seryl-[protein] + ADP + H(+). It catalyses the reaction L-threonyl-[protein] + ATP = O-phospho-L-threonyl-[protein] + ADP + H(+). Its function is as follows. In blood stage parasites, phosphorylates translation factor eIF2alpha in response to amino acid starvation. During the asexual blood stage, involved in the response to the host hormone melatonin which is used by the parasite to modulate its cell cycle. This chain is Eukaryotic translation initiation factor 2-alpha kinase 1, found in Plasmodium falciparum (isolate 3D7).